The sequence spans 337 residues: Glycerol-3-phosphate dehydrogenase [NAD(P)+] (337 aa).

Positions 11, 12, 32, and 109 each coordinate NADPH. Positions 109, 140, and 142 each coordinate sn-glycerol 3-phosphate. NADPH is bound at residue Ala144. Residues Lys195, Asp248, Ser258, Arg259, and Asn260 each coordinate sn-glycerol 3-phosphate. Residue Lys195 is the Proton acceptor of the active site. Arg259 contacts NADPH. 2 residues coordinate NADPH: Val283 and Glu285.

Belongs to the NAD-dependent glycerol-3-phosphate dehydrogenase family.

Its subcellular location is the cytoplasm. It carries out the reaction sn-glycerol 3-phosphate + NAD(+) = dihydroxyacetone phosphate + NADH + H(+). It catalyses the reaction sn-glycerol 3-phosphate + NADP(+) = dihydroxyacetone phosphate + NADPH + H(+). It participates in membrane lipid metabolism; glycerophospholipid metabolism. Catalyzes the reduction of the glycolytic intermediate dihydroxyacetone phosphate (DHAP) to sn-glycerol 3-phosphate (G3P), the key precursor for phospholipid synthesis. In Limosilactobacillus fermentum (strain NBRC 3956 / LMG 18251) (Lactobacillus fermentum), this protein is Glycerol-3-phosphate dehydrogenase [NAD(P)+].